The primary structure comprises 586 residues: Arginine--tRNA ligase (586 aa).

The short motif at 133–143 is the 'HIGH' region element; sequence ANPTGPLNIVS.

The protein belongs to the class-I aminoacyl-tRNA synthetase family. In terms of assembly, monomer.

The protein resides in the cytoplasm. The enzyme catalyses tRNA(Arg) + L-arginine + ATP = L-arginyl-tRNA(Arg) + AMP + diphosphate. This is Arginine--tRNA ligase from Leptospira interrogans serogroup Icterohaemorrhagiae serovar Lai (strain 56601).